The following is a 113-amino-acid chain: DIVITQDELSKPVTSGESVSISCRSSKSLLYKDGKTYLNWFLQGPQQSPRLLIYLMSTRASGVSDRFSGSGSGTDFTLEISRVKAEDVGVYYCQQLVEYPLTFGAGTKLELKR.

The segment at D1 to C23 is framework-1. A disulfide bridge links C23 with C93. Residues R24–N39 are complementarity-determining-1. Positions W40–Y54 are framework-2. Residues L55–S61 are complementarity-determining-2. The framework-3 stretch occupies residues G62–C93. A complementarity-determining-3 region spans residues Q94–T102. The segment at F103–K112 is framework-4.

The chain is Ig kappa chain V-II region MOPC 511 from Mus musculus (Mouse).